A 323-amino-acid chain; its full sequence is Aquaporin-2 (323 aa).

3 helical membrane passes run 32–54, 74–96, and 103–123; these read FLAV…FTHR, YVAG…SVLG, and CFCY…AIYA. An NPA 1 motif is present at residues 85–87; the sequence is NPA. A glycan (N-linked (GlcNAc...) asparagine) is linked at Asn-143. Helical transmembrane passes span 161-181 and 193-213; these read GAFV…LSMV and FPIA…YNAG. The short motif at 217–219 is the NPA 2 element; that stretch reads NPS. The chain crosses the membrane as a helical span at residues 243 to 263; sequence YTWFFVPVVGSHAGAIVGAVI. N-linked (GlcNAc...) asparagine glycosylation is present at Asn-292.

This sequence belongs to the MIP/aquaporin (TC 1.A.8) family.

The protein resides in the cell membrane. The catalysed reaction is H2O(in) = H2O(out). The enzyme catalyses glycerol(in) = glycerol(out). Functionally, aquaglyceroporin that may modulate the water content and osmolytes during anhydrobiosis. This is Aquaporin-2 from Milnesium tardigradum (Water bear).